The following is a 283-amino-acid chain: Protein/nucleic acid deglycase HchA (283 aa).

Zn(2+) contacts are provided by histidine 86, glutamate 91, and histidine 123. Catalysis depends on cysteine 185, which acts as the Nucleophile.

Belongs to the peptidase C56 family. HchA subfamily. As to quaternary structure, homodimer.

It is found in the cytoplasm. It carries out the reaction N(omega)-(1-hydroxy-2-oxopropyl)-L-arginyl-[protein] + H2O = lactate + L-arginyl-[protein] + H(+). It catalyses the reaction N(6)-(1-hydroxy-2-oxopropyl)-L-lysyl-[protein] + H2O = lactate + L-lysyl-[protein] + H(+). The enzyme catalyses S-(1-hydroxy-2-oxopropyl)-L-cysteinyl-[protein] + H2O = lactate + L-cysteinyl-[protein] + H(+). The catalysed reaction is N(omega)-(1-hydroxy-2-oxoethyl)-L-arginyl-[protein] + H2O = L-arginyl-[protein] + glycolate + H(+). It carries out the reaction N(6)-(1-hydroxy-2-oxoethyl)-L-lysyl-[protein] + H2O = glycolate + L-lysyl-[protein] + H(+). It catalyses the reaction S-(1-hydroxy-2-oxoethyl)-L-cysteinyl-[protein] + H2O = glycolate + L-cysteinyl-[protein] + H(+). The enzyme catalyses N(2)-(1-hydroxy-2-oxopropyl)-dGTP + H2O = lactate + dGTP + H(+). The catalysed reaction is N(2)-(1-hydroxy-2-oxopropyl)-GTP + H2O = lactate + GTP + H(+). It carries out the reaction N(2)-(1-hydroxy-2-oxopropyl)-GDP + H2O = lactate + GDP + H(+). It catalyses the reaction N(2)-(1-hydroxy-2-oxopropyl)-GMP + H2O = lactate + GMP + H(+). The enzyme catalyses N(2)-(1-hydroxy-2-oxoethyl)-dGTP + H2O = dGTP + glycolate + H(+). The catalysed reaction is N(2)-(1-hydroxy-2-oxoethyl)-GTP + H2O = glycolate + GTP + H(+). It carries out the reaction N(2)-(1-hydroxy-2-oxoethyl)-GDP + H2O = glycolate + GDP + H(+). It catalyses the reaction N(2)-(1-hydroxy-2-oxoethyl)-GMP + H2O = glycolate + GMP + H(+). The enzyme catalyses an N(2)-(1-hydroxy-2-oxopropyl)-guanosine in RNA + H2O = a guanosine in RNA + lactate + H(+). The catalysed reaction is an N(2)-(1-hydroxy-2-oxopropyl)-2'-deoxyguanosine in DNA + H2O = a 2'-deoxyguanosine in DNA + lactate + H(+). It carries out the reaction an N(2)-(1-hydroxy-2-oxoethyl)-guanosine in RNA + H2O = a guanosine in RNA + glycolate + H(+). It catalyses the reaction an N(2)-(1-hydroxy-2-oxoethyl)-2'-deoxyguanosine in DNA + H2O = a 2'-deoxyguanosine in DNA + glycolate + H(+). Functionally, protein and nucleotide deglycase that catalyzes the deglycation of the Maillard adducts formed between amino groups of proteins or nucleotides and reactive carbonyl groups of glyoxals. Thus, functions as a protein deglycase that repairs methylglyoxal- and glyoxal-glycated proteins, and releases repaired proteins and lactate or glycolate, respectively. Deglycates cysteine, arginine and lysine residues in proteins, and thus reactivates these proteins by reversing glycation by glyoxals. Acts on early glycation intermediates (hemithioacetals and aminocarbinols), preventing the formation of Schiff bases and advanced glycation endproducts (AGE). Also functions as a nucleotide deglycase able to repair glycated guanine in the free nucleotide pool (GTP, GDP, GMP, dGTP) and in DNA and RNA. Is thus involved in a major nucleotide repair system named guanine glycation repair (GG repair), dedicated to reversing methylglyoxal and glyoxal damage via nucleotide sanitization and direct nucleic acid repair. Plays an important role in protecting cells from carbonyl stress. In Escherichia coli O157:H7, this protein is Protein/nucleic acid deglycase HchA.